The chain runs to 803 residues: Urocanate reductase (803 aa).

S258 is modified (FMN phosphoryl serine). 7 residues coordinate FAD: A311, E330, N338, T339, G343, G344, and D573. The active-site Proton donor is the R632. FAD-binding residues include H739, E768, A783, and L784.

The protein belongs to the FAD-dependent oxidoreductase 2 family. FRD/SDH subfamily. FAD serves as cofactor. FMN is required as a cofactor.

It carries out the reaction dihydrourocanate + A = urocanate + AH2. Catalyzes the two-electron reduction of urocanate to dihydrourocanate (also named imidazole propionate or deamino-histidine). Dihydrourocanate is present at higher concentrations in subjects with type 2 diabetes, and directly impairs glucose tolerance and insulin signaling at the level of insulin receptor substrate (IRS) through activation of p38 gamma (MAPK12)-p62-mTORC1. Therefore, the UrdA enzyme from the gut bacteria S.mutans strain UA159 may contribute to the pathogenesis of type 2 diabetes by producing the microbial metabolite dihydrourocanate. The chain is Urocanate reductase from Streptococcus mutans serotype c (strain ATCC 700610 / UA159).